The sequence spans 131 residues: Histone H2A.2 (131 aa).

Positions 1–22 are disordered; sequence MSGGKGKAGSSEKASTSRSAKA. Ser-2 carries the post-translational modification N-acetylserine. N6-acetyllysine occurs at positions 5 and 7. Gln-105 carries the post-translational modification N5-methylglutamine. Ser-128 is modified (phosphoserine). Positions 128-129 match the [ST]-Q motif motif; the sequence is SQ.

This sequence belongs to the histone H2A family. As to quaternary structure, the nucleosome is a histone octamer containing two molecules each of H2A, H2B, H3 and H4 assembled in one H3-H4 heterotetramer and two H2A-H2B heterodimers. The octamer wraps approximately 147 bp of DNA. In terms of processing, phosphorylated to form H2AS128ph (gamma-H2A) in response to DNA double-strand breaks (DSBs) generated by exogenous genotoxic agents and by stalled replication forks. Phosphorylation is dependent on the DNA damage checkpoint kinases MEC1/ATR and TEL1/ATM, spreads on either side of a detected DSB site and may mark the surrounding chromatin for recruitment of proteins required for DNA damage signaling and repair. Gamma-H2A is removed from the DNA prior to the strand invasion-primer extension step of the repair process and subsequently dephosphorylated. Dephosphorylation is necessary for efficient recovery from the DNA damage checkpoint. Post-translationally, acetylated by ESA1 to form H2AK4ac and H2AK7ac.

The protein localises to the nucleus. It localises to the chromosome. Functionally, core component of nucleosome which plays a central role in DNA double strand break (DSB) repair. Nucleosomes wrap and compact DNA into chromatin, limiting DNA accessibility to the cellular machineries which require DNA as a template. Histones thereby play a central role in transcription regulation, DNA repair, DNA replication and chromosomal stability. DNA accessibility is regulated via a complex set of post-translational modifications of histones, also called histone code, and nucleosome remodeling. This Debaryomyces hansenii (strain ATCC 36239 / CBS 767 / BCRC 21394 / JCM 1990 / NBRC 0083 / IGC 2968) (Yeast) protein is Histone H2A.2 (HTA2).